The primary structure comprises 512 residues: Serine--tRNA ligase, cytoplasmic (512 aa).

M1 is modified (N-acetylmethionine). Residues 9-61 form an interaction with tRNA region; sequence RVDKGGDPALIRETQEKRFKDPGLVDQLVKADSEWRRCRFRADNLNKLKNLCS. S241 carries the phosphoserine modification. Residues T271 and R302 each coordinate L-serine. Residues 302-304 and 318-321 each bind ATP; these read RQE and VHQF. Position 323 is an N6-acetyllysine (K323). E325 contacts L-serine. Residue 391 to 394 participates in ATP binding; it reads ELVS. N427 contacts L-serine. Residues 470–512 form a disordered region; it reads FVKPAPIDQEPSKKQKKQHEGSKKKAKEVPLENQLQSMEVTEA. Basic and acidic residues predominate over residues 479–499; the sequence is EPSKKQKKQHEGSKKKAKEVP. Positions 482–494 match the Nuclear localization signal motif; the sequence is KKQKKQHEGSKKK. Residues 502-512 are compositionally biased toward polar residues; the sequence is NQLQSMEVTEA. Phosphoserine is present on S506.

This sequence belongs to the class-II aminoacyl-tRNA synthetase family. Type-1 seryl-tRNA synthetase subfamily. In terms of assembly, homodimer. The tRNA molecule may bind across the dimer. Interacts with SIRT2. Interacts with METTL6; interaction is required for the tRNA N(3)-methylcytidine methyltransferase activity of METTL6.

Its subcellular location is the cytoplasm. The protein resides in the nucleus. It catalyses the reaction tRNA(Ser) + L-serine + ATP = L-seryl-tRNA(Ser) + AMP + diphosphate + H(+). The catalysed reaction is tRNA(Sec) + L-serine + ATP = L-seryl-tRNA(Sec) + AMP + diphosphate + H(+). It functions in the pathway aminoacyl-tRNA biosynthesis; selenocysteinyl-tRNA(Sec) biosynthesis; L-seryl-tRNA(Sec) from L-serine and tRNA(Sec): step 1/1. Functionally, catalyzes the attachment of serine to tRNA(Ser) in a two-step reaction: serine is first activated by ATP to form Ser-AMP and then transferred to the acceptor end of tRNA(Ser). Is probably also able to aminoacylate tRNA(Sec) with serine, to form the misacylated tRNA L-seryl-tRNA(Sec), which will be further converted into selenocysteinyl-tRNA(Sec). In the nucleus, binds to the VEGFA core promoter and prevents MYC binding and transcriptional activation by MYC. Recruits SIRT2 to the VEGFA promoter, promoting deacetylation of histone H4 at 'Lys-16' (H4K16). Thereby, inhibits the production of VEGFA and sprouting angiogenesis mediated by VEGFA. The polypeptide is Serine--tRNA ligase, cytoplasmic (Sars1) (Mus musculus (Mouse)).